We begin with the raw amino-acid sequence, 1506 residues long: DDB1- and CUL4-associated factor 1 (1506 aa).

Positions 141-499 (QPLRTYSTGL…STLEILNLED (359 aa)) are protein kinase-like. S202 and S254 each carry phosphoserine. A disordered region spans residues 241–275 (RLDSSHKTSSRVNSATKPEEGGLKKNKSAKHGDRE). In terms of domain architecture, Chromo spans 561–592 (SYTHEQIVEMMEFLIEYGPAQLYWEPAEVFLK). An N6-acetyllysine modification is found at K700. S827 carries the phosphoserine modification. A LisH domain is found at 845–877 (PEKELLLLIRNHLISKGLGETATVLTREADLPM). T887 is modified (phosphothreonine). Phosphoserine is present on residues S894 and S897. 2 disordered regions span residues 916-946 (ATVG…GPSY) and 977-999 (KSDH…HLPS). Over residues 924–943 (SAPPAHPPPRPPQGSLPLPG) the composition is skewed to pro residues. Phosphoserine occurs at positions 978 and 999. WD repeat units lie at residues 1090-1129 (EDES…EEAS), 1132-1173 (CHNS…DMKH), 1175-1212 (FTED…KLLT), 1214-1246 (FNPD…WDVR), and 1247-1289 (SAQA…LLHT). Residues 1090–1289 (EDESGFTCCA…DLRTFHLLHT (200 aa)) form a WD repeat-like region region. 2 consecutive short sequence motifs (DWD box) follow at residues 1241-1248 (VLWDVRSA) and 1277-1284 (EIWDLRTF). At S1327 the chain carries Phosphoserine. Residues 1392–1506 (RLAEDEDEEE…EDDIILSLNE (115 aa)) form a disordered region. 2 stretches are compositionally biased toward acidic residues: residues 1395-1482 (EDED…EEVE) and 1489-1500 (DSSDNSDLEDDI). An interaction with NF2 region spans residues 1417-1506 (DDDTDDLDEL…EDDIILSLNE (90 aa)).

It belongs to the VPRBP/DCAF1 family. As to quaternary structure, component of the DCX (DDB1-CUL4-X-box) E3 ubiquitin-protein ligase complex, named CUL4A-RBX1-DDB1-DCAF1/VPRBP complex. Interacts with DDB1; the interaction is direct. Also forms a ternary complex with DDA1 and DDB1. Interacts with NF2 (via FERM domain). Component of the EDVP complex, a E3 ligase complex containing DYRK2, EDD/UBR5, DDB1 and DCAF1. Interacts with DYRK2; the interaction is direct. Interacts with RAG1; the interaction is direct. Interacts with LLGL1 and LLGL2. Interacts with histone H3. Interacts with ESR1 and LATS1; probably recruited by LATS1 to promote ESR1 ubiquitination and ubiquitin-mediated proteasomal degradation. Directly interacts with TET1, TET2 and TET3 (via C-terminus). Interacts with CEP78; promoting DCAF1 localization to centrosomes. Widely expressed. Expressed in oocytes and zygotes (at protein level).

The protein resides in the cytoplasm. It localises to the nucleus. It is found in the cytoskeleton. The protein localises to the microtubule organizing center. Its subcellular location is the centrosome. It catalyses the reaction L-seryl-[protein] + ATP = O-phospho-L-seryl-[protein] + ADP + H(+). The enzyme catalyses L-threonyl-[protein] + ATP = O-phospho-L-threonyl-[protein] + ADP + H(+). It participates in protein modification; protein ubiquitination. Its function is as follows. Acts both as a substrate recognition component of E3 ubiquitin-protein ligase complexes and as an atypical serine/threonine-protein kinase, playing key roles in various processes such as cell cycle, telomerase regulation and histone modification. Probable substrate-specific adapter of a DCX (DDB1-CUL4-X-box) E3 ubiquitin-protein ligase complex, named CUL4A-RBX1-DDB1-DCAF1/VPRBP complex, which mediates ubiquitination and proteasome-dependent degradation of proteins such as NF2. Involved in the turnover of methylated proteins: recognizes and binds methylated proteins via its chromo domain, leading to ubiquitination of target proteins by the RBX1-DDB1-DCAF1/VPRBP complex. The CUL4A-RBX1-DDB1-DCAF1/VPRBP complex is also involved in B-cell development: DCAF1 is recruited by RAG1 to ubiquitinate proteins, leading to limit error-prone repair during V(D)J recombination. Also part of the EDVP complex, an E3 ligase complex that mediates ubiquitination of proteins such as TERT, leading to TERT degradation and telomerase inhibition. The EDVP complex also mediates ubiquitination and degradation of CCP110. Also acts as an atypical serine/threonine-protein kinase that specifically mediates phosphorylation of 'Thr-120' of histone H2A (H2AT120ph) in a nucleosomal context, thereby repressing transcription. H2AT120ph is present in the regulatory region of many tumor suppresor genes, down-regulates their transcription and is present at high level in a number of tumors. Involved in JNK-mediated apoptosis during cell competition process via its interaction with LLGL1 and LLGL2. By acting on TET dioxygenses, essential for oocyte maintenance at the primordial follicle stage, hence essential for female fertility. This Mus musculus (Mouse) protein is DDB1- and CUL4-associated factor 1.